Consider the following 316-residue polypeptide: Porphobilinogen deaminase (316 aa).

C245 bears the S-(dipyrrolylmethanemethyl)cysteine mark.

The protein belongs to the HMBS family. Monomer. Dipyrromethane serves as cofactor.

The enzyme catalyses 4 porphobilinogen + H2O = hydroxymethylbilane + 4 NH4(+). It functions in the pathway porphyrin-containing compound metabolism; protoporphyrin-IX biosynthesis; coproporphyrinogen-III from 5-aminolevulinate: step 2/4. Its pathway is porphyrin-containing compound metabolism; chlorophyll biosynthesis. Tetrapolymerization of the monopyrrole PBG into the hydroxymethylbilane pre-uroporphyrinogen in several discrete steps. The polypeptide is Porphobilinogen deaminase (Prochlorococcus marinus (strain MIT 9312)).